A 234-amino-acid chain; its full sequence is Thymidylate kinase (234 aa).

An ATP-binding site is contributed by 10-17 (GGEGSGKT).

It belongs to the thymidylate kinase family.

The catalysed reaction is dTMP + ATP = dTDP + ADP. In terms of biological role, phosphorylation of dTMP to form dTDP in both de novo and salvage pathways of dTTP synthesis. The protein is Thymidylate kinase of Cyanothece sp. (strain PCC 7425 / ATCC 29141).